Reading from the N-terminus, the 620-residue chain is Sodium-dependent dopamine transporter (620 aa).

Topologically, residues 1 to 56 are cytoplasmic; sequence MSKSKCSVGLMSSVVAPAKEPNAVGPKEVELILVKEQNGVQLTSSTLTNPRQSPVE. Residues 57–95 traverse the membrane as a discontinuously helical segment; it reads AQDRETWGKKIDFLLSVIGFAVDLANVWRFPYLCYKNGG. Na(+) contacts are provided by G75, A77, V78, D79, and N82. D79 provides a ligand contact to dopamine. A run of 2 helical transmembrane segments spans residues 96–127 and 128–171; these read GAFL…NREG and AAGV…FSSF. 2 residues coordinate dopamine: S149 and G153. The Extracellular portion of the chain corresponds to 172 to 236; that stretch reads TTELPWIHCN…SHGIDDLGPP (65 aa). C180 and C189 are joined by a disulfide. N-linked (GlcNAc...) asparagine glycans are attached at residues N181, N188, and N205. Helical transmembrane passes span 237–256 and 257–287; these read RWQL…FSLW and KGVK…GVTL. At 288 to 306 the chain is on the extracellular side; sequence PGAIDGIRAYLSVDFYRLC. The chain crosses the membrane as a discontinuously helical span at residues 307-335; sequence EASVWIDAATQVCFSLGVGFGVLIAFSSY. Q317 contributes to the chloride binding site. A dopamine-binding site is contributed by F320. Na(+)-binding residues include S321 and N353. A chloride-binding site is contributed by S321. A helical transmembrane segment spans residues 336–376; the sequence is NKFTNNCYRDAIVTTSINSLTSFSSGFVVFSFLGYMAQKHS. Chloride is bound at residue S357. Residues 377-400 lie on the Extracellular side of the membrane; sequence VPIGDVAKDGPGLIFIIYPEAIAT. A run of 3 helical transmembrane segments spans residues 401–442, 443–466, and 467–499; these read LPLS…QLLH, RHRE…CVTN, and GGIY…AWFY. Residues L418, D421, and S422 each contribute to the Na(+) site. Residues S422 and A423 each coordinate dopamine. The Cytoplasmic portion of the chain corresponds to 500–516; the sequence is GVGQFSDDIQQMTGQRP. A helical transmembrane segment spans residues 517-542; that stretch reads SLYWRLCWKLVSPCFLLFVVVVSIVT. Residues 543–553 are Extracellular-facing; that stretch reads FRPPHYGAYIF. The helical transmembrane segment at 554 to 583 threads the bilayer; that stretch reads PDWANALGWVIATSSMAMVPIYAAYKFCSL. Positions 561 to 590 are interaction with TGFB1I1; the sequence is GWVIATSSMAMVPIYAAYKFCSLPGSFREK. Topologically, residues 584–620 are cytoplasmic; it reads PGSFREKLAYAIAPEKDRELVDRGEVRQFTLRHWLKV.

This sequence belongs to the sodium:neurotransmitter symporter (SNF) (TC 2.A.22) family. SLC6A3 subfamily. In terms of assembly, monomer. Homooligomer; disulfide-linked. Interacts with PRKCABP and TGFB1I1. Interacts (via N-terminus) with SYNGR3 (via N-terminus). Interacts with SLC18A2. Interacts with TOR1A (ATP-bound); TOR1A regulates SLC6A3 subcellular location. Interacts with alpha-synuclein/SNCA. Interacts with SEPTIN4. In terms of tissue distribution, highly expressed in substantia nigra. Expressed in axonal varicosities in dopaminergic nerve terminals (at protein level). Expressed in the striatum (at protein level).

It is found in the cell membrane. The protein localises to the cell projection. Its subcellular location is the neuron projection. The protein resides in the axon. It catalyses the reaction dopamine(out) + chloride(out) + Na(+)(out) = dopamine(in) + chloride(in) + Na(+)(in). The catalysed reaction is dopamine(out) + chloride(out) + 2 Na(+)(out) = dopamine(in) + chloride(in) + 2 Na(+)(in). It carries out the reaction (R)-noradrenaline(out) + chloride(out) + Na(+)(out) = (R)-noradrenaline(in) + chloride(in) + Na(+)(in). Its activity is regulated as follows. Inhibited by cocaine, which occupies the same binding site as dopamine. Inhibited by zinc ions. Enhanced by the antibiotic valinomycin. Inhibited by benztropine. Inhibited by GBR 12909 dihydrochloride and amphetamine. Inhibited by mazindol, GBR 12783 dihydrochloride, nomifensine, diclofensine, amfonelic acid, Lu 19005, Win-35428, bupropion and ritalin. Mediates sodium- and chloride-dependent transport of dopamine. Also mediates sodium- and chloride-dependent transport of norepinephrine (also known as noradrenaline). Regulator of light-dependent retinal hyaloid vessel regression, downstream of OPN5 signaling. This is Sodium-dependent dopamine transporter (SLC6A3) from Homo sapiens (Human).